We begin with the raw amino-acid sequence, 280 residues long: 3-methyl-2-oxobutanoate hydroxymethyltransferase (280 aa).

Residues Asp60 and Asp99 each coordinate Mg(2+). Residues 60 to 61 (DS), Asp99, and Lys129 each bind 3-methyl-2-oxobutanoate. Position 131 (Glu131) interacts with Mg(2+). The active-site Proton acceptor is Glu198.

This sequence belongs to the PanB family. As to quaternary structure, homodecamer; pentamer of dimers. Mg(2+) is required as a cofactor.

The protein resides in the cytoplasm. It carries out the reaction 3-methyl-2-oxobutanoate + (6R)-5,10-methylene-5,6,7,8-tetrahydrofolate + H2O = 2-dehydropantoate + (6S)-5,6,7,8-tetrahydrofolate. It participates in cofactor biosynthesis; (R)-pantothenate biosynthesis; (R)-pantoate from 3-methyl-2-oxobutanoate: step 1/2. Its function is as follows. Catalyzes the reversible reaction in which hydroxymethyl group from 5,10-methylenetetrahydrofolate is transferred onto alpha-ketoisovalerate to form ketopantoate. The protein is 3-methyl-2-oxobutanoate hydroxymethyltransferase of Thermobifida fusca (strain YX).